A 206-amino-acid polypeptide reads, in one-letter code: MMKAILATLAIFGCIWPGQSVMFHLTPNTQKCLKEDIQANQMVMGEYEVSDVPGQVIDFIVRDTKGHILSQKEHITKAKFSFMSEVYDSYEICFISKVPPHQRGIAQQVALTTKKGVETKNYEGIGEASKLKPLEVDLKRLEDLSDSIVRDFVMMRKREEEMRDTNEKTNSRVLFFSIFSMCCLLGLATWQVLYLRRYFKAKKLIE.

The N-terminal stretch at 1 to 20 (MMKAILATLAIFGCIWPGQS) is a signal peptide. The Lumenal portion of the chain corresponds to 21–172 (VMFHLTPNTQ…RDTNEKTNSR (152 aa)). Residues 30 to 140 (QKCLKEDIQA…LKPLEVDLKR (111 aa)) enclose the GOLD domain. Residues 173–193 (VLFFSIFSMCCLLGLATWQVL) form a helical membrane-spanning segment. The Cytoplasmic segment spans residues 194–206 (YLRRYFKAKKLIE).

Belongs to the EMP24/GP25L family.

The protein resides in the membrane. Its function is as follows. Eca and bai are essential, though not redundant, for dorsoventral patterning of the embryo. Specifically required during early embryogenesis for the activity of maternal tkv, while the zygotic tkv is not affected. This Drosophila willistoni (Fruit fly) protein is Transmembrane emp24 domain-containing protein bai.